The primary structure comprises 101 residues: Small ribosomal subunit protein bS18c (101 aa).

Residues 1 to 19 (MDKSKRPFRKSKRSFRKRL) show a composition bias toward basic residues. The tract at residues 1–23 (MDKSKRPFRKSKRSFRKRLPPIG) is disordered.

The protein belongs to the bacterial ribosomal protein bS18 family. In terms of assembly, part of the 30S ribosomal subunit.

It localises to the plastid. It is found in the chloroplast. This is Small ribosomal subunit protein bS18c from Chloranthus spicatus (Chulantree).